The chain runs to 202 residues: LexA repressor (202 aa).

Positions 28–48 form a DNA-binding region, H-T-H motif; sequence RAEIAQQLGFRSPNAAEEHLK. Residues Ser119 and Lys156 each act as for autocatalytic cleavage activity in the active site.

The protein belongs to the peptidase S24 family. Homodimer.

The catalysed reaction is Hydrolysis of Ala-|-Gly bond in repressor LexA.. Represses a number of genes involved in the response to DNA damage (SOS response), including recA and lexA. Binds to the 16 bp palindromic sequence 5'-CTGTATATATATACAG-3'. In the presence of single-stranded DNA, RecA interacts with LexA causing an autocatalytic cleavage which disrupts the DNA-binding part of LexA, leading to derepression of the SOS regulon and eventually DNA repair. The protein is LexA repressor of Pectobacterium carotovorum subsp. carotovorum (strain PC1).